A 132-amino-acid polypeptide reads, in one-letter code: MAKEYSRTQRIGDQMQRELAELIRREVKDPRVGLVTITAVDVSRDLGHAKVFITVMGEETPDAVQQSLKALNSAASFLRLHLGRSMQLRSVPQLHFHFDESVSRGVHLSALIERAVAEDRLHKDTDEQDTKE.

Belongs to the RbfA family. In terms of assembly, monomer. Binds 30S ribosomal subunits, but not 50S ribosomal subunits or 70S ribosomes.

Its subcellular location is the cytoplasm. Its function is as follows. One of several proteins that assist in the late maturation steps of the functional core of the 30S ribosomal subunit. Associates with free 30S ribosomal subunits (but not with 30S subunits that are part of 70S ribosomes or polysomes). Required for efficient processing of 16S rRNA. May interact with the 5'-terminal helix region of 16S rRNA. This is Ribosome-binding factor A from Pseudomonas putida (strain W619).